The following is a 142-amino-acid chain: Hemoglobin subunit alpha-A (142 aa).

The 141-residue stretch at 2–142 (VLSANDKTNV…VGNVLTAKYR (141 aa)) folds into the Globin domain. H59 is an O2 binding site. H88 provides a ligand contact to heme b.

Belongs to the globin family. Heterotetramer of two alpha chains and two beta chains. Red blood cells.

Functionally, involved in oxygen transport from the lung to the various peripheral tissues. The protein is Hemoglobin subunit alpha-A (HBAA) of Accipiter gentilis (Northern goshawk).